A 284-amino-acid polypeptide reads, in one-letter code: 2-dehydro-3-deoxyphosphooctonate aldolase (284 aa).

Belongs to the KdsA family.

The protein localises to the cytoplasm. It catalyses the reaction D-arabinose 5-phosphate + phosphoenolpyruvate + H2O = 3-deoxy-alpha-D-manno-2-octulosonate-8-phosphate + phosphate. Its pathway is carbohydrate biosynthesis; 3-deoxy-D-manno-octulosonate biosynthesis; 3-deoxy-D-manno-octulosonate from D-ribulose 5-phosphate: step 2/3. It functions in the pathway bacterial outer membrane biogenesis; lipopolysaccharide biosynthesis. The sequence is that of 2-dehydro-3-deoxyphosphooctonate aldolase from Salmonella paratyphi A (strain ATCC 9150 / SARB42).